We begin with the raw amino-acid sequence, 233 residues long: Ribonuclease 3 (233 aa).

An RNase III domain is found at 9-136 (LQHFWEQFHL…IIGSVYLSGG (128 aa)). Glutamate 49 serves as a coordination point for Mg(2+). The active site involves aspartate 53. Residues aspartate 122 and glutamate 125 each coordinate Mg(2+). Residue glutamate 125 is part of the active site. The DRBM domain maps to 162 to 231 (DSKSALQEFV…ARAALALLKV (70 aa)).

Belongs to the ribonuclease III family. Homodimer. Mg(2+) serves as cofactor.

The protein localises to the cytoplasm. The catalysed reaction is Endonucleolytic cleavage to 5'-phosphomonoester.. In terms of biological role, digests double-stranded RNA. Involved in the processing of primary rRNA transcript to yield the immediate precursors to the large and small rRNAs (23S and 16S). Processes some mRNAs, and tRNAs when they are encoded in the rRNA operon. Processes pre-crRNA and tracrRNA of type II CRISPR loci if present in the organism. The chain is Ribonuclease 3 from Moorella thermoacetica (strain ATCC 39073 / JCM 9320).